Reading from the N-terminus, the 99-residue chain is Small ribosomal subunit protein uS14m (99 aa).

Belongs to the universal ribosomal protein uS14 family.

It is found in the mitochondrion. The chain is Small ribosomal subunit protein uS14m (RPS14) from Oenothera berteroana (Bertero's evening primrose).